Consider the following 460-residue polypeptide: Bifunctional protein GlmU (460 aa).

Residues 1–230 (MSNNYAIILA…FDESLGVNDR (230 aa)) are pyrophosphorylase. UDP-N-acetyl-alpha-D-glucosamine contacts are provided by residues 9 to 12 (LAAG), K23, Q73, and 78 to 79 (GT). D103 serves as a coordination point for Mg(2+). UDP-N-acetyl-alpha-D-glucosamine contacts are provided by G140, E155, N170, and N228. Residue N228 coordinates Mg(2+). Residues 231–251 (VALATAEAVMRKRINEKHMVN) are linker. The N-acetyltransferase stretch occupies residues 252–460 (GVTFINPDAT…TRFPFHPSQK (209 aa)). 2 residues coordinate UDP-N-acetyl-alpha-D-glucosamine: R333 and K351. H363 functions as the Proton acceptor in the catalytic mechanism. UDP-N-acetyl-alpha-D-glucosamine-binding residues include Y366 and N377. Residues A380, 386–387 (NY), S405, A423, and R440 contribute to the acetyl-CoA site.

It in the N-terminal section; belongs to the N-acetylglucosamine-1-phosphate uridyltransferase family. This sequence in the C-terminal section; belongs to the transferase hexapeptide repeat family. Homotrimer. Mg(2+) serves as cofactor.

Its subcellular location is the cytoplasm. The catalysed reaction is alpha-D-glucosamine 1-phosphate + acetyl-CoA = N-acetyl-alpha-D-glucosamine 1-phosphate + CoA + H(+). It catalyses the reaction N-acetyl-alpha-D-glucosamine 1-phosphate + UTP + H(+) = UDP-N-acetyl-alpha-D-glucosamine + diphosphate. Its pathway is nucleotide-sugar biosynthesis; UDP-N-acetyl-alpha-D-glucosamine biosynthesis; N-acetyl-alpha-D-glucosamine 1-phosphate from alpha-D-glucosamine 6-phosphate (route II): step 2/2. It participates in nucleotide-sugar biosynthesis; UDP-N-acetyl-alpha-D-glucosamine biosynthesis; UDP-N-acetyl-alpha-D-glucosamine from N-acetyl-alpha-D-glucosamine 1-phosphate: step 1/1. It functions in the pathway bacterial outer membrane biogenesis; LPS lipid A biosynthesis. In terms of biological role, catalyzes the last two sequential reactions in the de novo biosynthetic pathway for UDP-N-acetylglucosamine (UDP-GlcNAc). The C-terminal domain catalyzes the transfer of acetyl group from acetyl coenzyme A to glucosamine-1-phosphate (GlcN-1-P) to produce N-acetylglucosamine-1-phosphate (GlcNAc-1-P), which is converted into UDP-GlcNAc by the transfer of uridine 5-monophosphate (from uridine 5-triphosphate), a reaction catalyzed by the N-terminal domain. The chain is Bifunctional protein GlmU from Streptococcus suis (strain 98HAH33).